The following is a 388-amino-acid chain: Isocitrate dehydrogenase [NAD] subunit 1, mitochondrial (388 aa).

The N-terminal 35 residues, 1-35, are a transit peptide targeting the mitochondrion; the sequence is MFSLRTAQPAQSLFRAATNTYSTSLPRSAIAARSF. Residues arginine 137, arginine 168, and aspartate 255 each coordinate substrate. Aspartate 255 is a Mg(2+) binding site.

This sequence belongs to the isocitrate and isopropylmalate dehydrogenases family. Octamer of two non-identical subunits IDH1 and IDH2. Mg(2+) is required as a cofactor. Requires Mn(2+) as cofactor.

It localises to the mitochondrion. The catalysed reaction is D-threo-isocitrate + NAD(+) = 2-oxoglutarate + CO2 + NADH. Functionally, performs an essential role in the oxidative function of the citric acid cycle. The sequence is that of Isocitrate dehydrogenase [NAD] subunit 1, mitochondrial (IDH1) from Ajellomyces capsulatus (Darling's disease fungus).